Here is a 493-residue protein sequence, read N- to C-terminus: Aspartyl/glutamyl-tRNA(Asn/Gln) amidotransferase subunit B (493 aa).

It belongs to the GatB/GatE family. GatB subfamily. In terms of assembly, heterotrimer of A, B and C subunits.

The catalysed reaction is L-glutamyl-tRNA(Gln) + L-glutamine + ATP + H2O = L-glutaminyl-tRNA(Gln) + L-glutamate + ADP + phosphate + H(+). It catalyses the reaction L-aspartyl-tRNA(Asn) + L-glutamine + ATP + H2O = L-asparaginyl-tRNA(Asn) + L-glutamate + ADP + phosphate + 2 H(+). In terms of biological role, allows the formation of correctly charged Asn-tRNA(Asn) or Gln-tRNA(Gln) through the transamidation of misacylated Asp-tRNA(Asn) or Glu-tRNA(Gln) in organisms which lack either or both of asparaginyl-tRNA or glutaminyl-tRNA synthetases. The reaction takes place in the presence of glutamine and ATP through an activated phospho-Asp-tRNA(Asn) or phospho-Glu-tRNA(Gln). The protein is Aspartyl/glutamyl-tRNA(Asn/Gln) amidotransferase subunit B of Aromatoleum aromaticum (strain DSM 19018 / LMG 30748 / EbN1) (Azoarcus sp. (strain EbN1)).